The primary structure comprises 307 residues: Methionyl-tRNA formyltransferase (307 aa).

Position 108–111 (108–111 (SLLP)) interacts with (6S)-5,6,7,8-tetrahydrofolate.

The protein belongs to the Fmt family.

It catalyses the reaction L-methionyl-tRNA(fMet) + (6R)-10-formyltetrahydrofolate = N-formyl-L-methionyl-tRNA(fMet) + (6S)-5,6,7,8-tetrahydrofolate + H(+). In terms of biological role, attaches a formyl group to the free amino group of methionyl-tRNA(fMet). The formyl group appears to play a dual role in the initiator identity of N-formylmethionyl-tRNA by promoting its recognition by IF2 and preventing the misappropriation of this tRNA by the elongation apparatus. This is Methionyl-tRNA formyltransferase from Xylella fastidiosa (strain 9a5c).